The chain runs to 499 residues: Glycerol kinase (499 aa).

Threonine 12 is an ADP binding site. Residues threonine 12, threonine 13, and serine 14 each contribute to the ATP site. Threonine 12 is a binding site for sn-glycerol 3-phosphate. Residue arginine 16 participates in ADP binding. The sn-glycerol 3-phosphate site is built by arginine 82, glutamate 83, tyrosine 135, and aspartate 245. Glycerol-binding residues include arginine 82, glutamate 83, tyrosine 135, aspartate 245, and glutamine 246. Positions 267 and 310 each coordinate ADP. Residues threonine 267, glycine 310, glutamine 314, and glycine 411 each coordinate ATP. ADP contacts are provided by glycine 411 and asparagine 415.

The protein belongs to the FGGY kinase family. Homotetramer and homodimer (in equilibrium).

The enzyme catalyses glycerol + ATP = sn-glycerol 3-phosphate + ADP + H(+). It functions in the pathway polyol metabolism; glycerol degradation via glycerol kinase pathway; sn-glycerol 3-phosphate from glycerol: step 1/1. Its activity is regulated as follows. Activated by phosphorylation and inhibited by fructose 1,6-bisphosphate (FBP). In terms of biological role, key enzyme in the regulation of glycerol uptake and metabolism. Catalyzes the phosphorylation of glycerol to yield sn-glycerol 3-phosphate. The protein is Glycerol kinase of Clostridium beijerinckii (strain ATCC 51743 / NCIMB 8052) (Clostridium acetobutylicum).